We begin with the raw amino-acid sequence, 363 residues long: Peptide chain release factor 1 (363 aa).

Gln-237 carries the N5-methylglutamine modification. A compositionally biased stretch (basic and acidic residues) spans Glu-284–Arg-296. The disordered stretch occupies residues Glu-284–Arg-305.

It belongs to the prokaryotic/mitochondrial release factor family. In terms of processing, methylated by PrmC. Methylation increases the termination efficiency of RF1.

Its subcellular location is the cytoplasm. Its function is as follows. Peptide chain release factor 1 directs the termination of translation in response to the peptide chain termination codons UAG and UAA. This is Peptide chain release factor 1 from Shewanella sp. (strain MR-4).